The sequence spans 503 residues: Cobyric acid synthase (503 aa).

The GATase cobBQ-type domain occupies 260 to 453 (KIGVAAIYFP…FHALFDESSV (194 aa)). The active-site Nucleophile is the cysteine 341. The active site involves histidine 445.

Belongs to the CobB/CobQ family. CobQ subfamily.

The protein operates within cofactor biosynthesis; adenosylcobalamin biosynthesis. Catalyzes amidations at positions B, D, E, and G on adenosylcobyrinic A,C-diamide. NH(2) groups are provided by glutamine, and one molecule of ATP is hydrogenolyzed for each amidation. The chain is Cobyric acid synthase from Pelodictyon phaeoclathratiforme (strain DSM 5477 / BU-1).